The chain runs to 432 residues: MQVSVETTQGLGRRVTITIAADSIETAVKSELVNVAKKVRIDGFRKGKVPMNIVAQRYGASVRQDVLGDLMSRNFIDAIIKEKINPAGAPTYVPGEYKLGEDFTYSVEFEVYPEVELQGLEAIEVEKPIVEVTDADVDGMLDTLRKQQATWKEKDGAVEAEDRVTIDFTGSVDGEEFEGGKASDFVLAMGQGRMIPGFEDGIKGHKAGEEFTIDVTFPEEYHAENLKGKAAKFAINLKKVEERELPELTAEFIKRFGVEDGSVEGLRAEVRKNMERELKSAIRNRVKSQAIEGLVKANDIDVPAALIDSEIDVLRRQAAQRFGGNEKQALELPRELFEEQAKRRVVVGLLLGEVIRTNELKADEERVKGLIEEMASAYEDPKEVIEFYSKNKELMDNMRNVALEEQAVEAVLAKAKVTEKETTFNELMNQQA.

The PPIase FKBP-type domain occupies 161–246; the sequence is EDRVTIDFTG…LKKVEERELP (86 aa).

It belongs to the FKBP-type PPIase family. Tig subfamily. Homodimer and monomer. In vivo most of the ribosomes are in complex with monomeric TF. Uncomplexed TF, however, is in a monomer-dimer equilibrium with approximately two thirds of TF existing in a dimeric state.

The protein resides in the cytoplasm. It catalyses the reaction [protein]-peptidylproline (omega=180) = [protein]-peptidylproline (omega=0). Functionally, involved in protein export. Acts as a chaperone by maintaining the newly synthesized protein in an open conformation. Functions as a peptidyl-prolyl cis-trans isomerase. The protein is Trigger factor of Escherichia coli O127:H6 (strain E2348/69 / EPEC).